Reading from the N-terminus, the 467-residue chain is MANRKLFIKSYGCQMNVYDAGRMADVMAPLGYDLVSEADGADLVILNTCHIREKAAEKVFSDLGRLRPFKEAMAAEGRRMLVAVAGCVAQAEGAELMARAKIVDMVVGPQAYHRLPEMVAKVERGAGRVLDTDFPIEPKFDFLPAPQAHGPSAFLSVQEGCDKFCTFCVVPYTRGAEYSRPVADVLREAALLAEGGVREITLLGQNVNAYHGEAPDGRTWGLGRLARALAEIPGVARLRYTTSHPRDVDDDLIAAHREVAALTPFIHLPVQSGSDRILAAMNRGHDVEGYRRIIDRLRAARDDMAFSSDFIVGFPGESERDFQATLALIDEVRFIQAYSFKYSPRPGTPAAALSAQLPEAEKSARLIALQARLVEIQQAFNQACVGRPMDVLLDRPGRHAGQLVGRSPWMQPVHLEAPAALLGTLAPVVVETATSNSLAARLVEGNSSMSSDRVLAEEAPPPARIRA.

The region spanning 4 to 124 (RKLFIKSYGC…LPEMVAKVER (121 aa)) is the MTTase N-terminal domain. Residues C13, C49, C87, C161, C165, and C168 each coordinate [4Fe-4S] cluster. Residues 147–379 (QAHGPSAFLS…QARLVEIQQA (233 aa)) enclose the Radical SAM core domain. Residues 382–444 (QACVGRPMDV…SNSLAARLVE (63 aa)) enclose the TRAM domain.

It belongs to the methylthiotransferase family. MiaB subfamily. As to quaternary structure, monomer. The cofactor is [4Fe-4S] cluster.

It is found in the cytoplasm. It catalyses the reaction N(6)-dimethylallyladenosine(37) in tRNA + (sulfur carrier)-SH + AH2 + 2 S-adenosyl-L-methionine = 2-methylsulfanyl-N(6)-dimethylallyladenosine(37) in tRNA + (sulfur carrier)-H + 5'-deoxyadenosine + L-methionine + A + S-adenosyl-L-homocysteine + 2 H(+). Functionally, catalyzes the methylthiolation of N6-(dimethylallyl)adenosine (i(6)A), leading to the formation of 2-methylthio-N6-(dimethylallyl)adenosine (ms(2)i(6)A) at position 37 in tRNAs that read codons beginning with uridine. In Rhodospirillum rubrum (strain ATCC 11170 / ATH 1.1.1 / DSM 467 / LMG 4362 / NCIMB 8255 / S1), this protein is tRNA-2-methylthio-N(6)-dimethylallyladenosine synthase.